We begin with the raw amino-acid sequence, 447 residues long: Ribosomal protein uS12 methylthiotransferase RimO (447 aa).

The 111-residue stretch at 10 to 120 (PKVGFVSLGC…VVNAVHDVVP (111 aa)) folds into the MTTase N-terminal domain. Residues cysteine 19, cysteine 55, cysteine 84, cysteine 153, cysteine 157, and cysteine 160 each coordinate [4Fe-4S] cluster. Positions 139-377 (LTPRHYAYLK…MAHQQAISAA (239 aa)) constitute a Radical SAM core domain. In terms of domain architecture, TRAM spans 380 to 447 (QMKIGKEIEV…DEYDLWAEML (68 aa)).

It belongs to the methylthiotransferase family. RimO subfamily. The cofactor is [4Fe-4S] cluster.

It is found in the cytoplasm. The enzyme catalyses L-aspartate(89)-[ribosomal protein uS12]-hydrogen + (sulfur carrier)-SH + AH2 + 2 S-adenosyl-L-methionine = 3-methylsulfanyl-L-aspartate(89)-[ribosomal protein uS12]-hydrogen + (sulfur carrier)-H + 5'-deoxyadenosine + L-methionine + A + S-adenosyl-L-homocysteine + 2 H(+). Functionally, catalyzes the methylthiolation of an aspartic acid residue of ribosomal protein uS12. In Pseudomonas savastanoi pv. phaseolicola (strain 1448A / Race 6) (Pseudomonas syringae pv. phaseolicola (strain 1448A / Race 6)), this protein is Ribosomal protein uS12 methylthiotransferase RimO.